Consider the following 242-residue polypeptide: MDLSSKPQQQLLNSLPIAGELTVTGEMGVCYKECLKNHAANLGGHALDGCGEFMPSPTATSTDPSSLRCAACGCHRNFHRRDPSENLNFLTAPPISSPSGTESPPSRHVSSPVPCSYYTSAPPHHVILSLSSGFPGPSDQDPTVVRSENSSRGAMRKRTRTKFTPEQKIKMRAFAEKAGWKINGCDEKSVREFCNEVGIERGVLKVWMHNNKYSLLNGKIREIEHGLCLNTHSNDGDGSSSS.

The ZF-HD dimerization-type; degenerate zinc finger occupies 31–82 (YKECLKNHAANLGGHALDGCGEFMPSPTATSTDPSSLRCAACGCHRNFHRRD). Disordered regions lie at residues 83–109 (PSEN…SRHV) and 135–161 (PGPS…RTRT). Residues 156–213 (RKRTRTKFTPEQKIKMRAFAEKAGWKINGCDEKSVREFCNEVGIERGVLKVWMHNNKY) constitute a DNA-binding region (homeobox; atypical).

Homo- and heterodimer with other ZFHD proteins. Interacts with HIPP20, HIPP21, HIPP22, HIPP23, HIPP24, HIPP26, HIPP27, HIPP30 and MED25 (via ACID domain). Interacts with NAC019, NAC055 and NAC072 (via NAC binding domain). Binds to ZHD1, ZHD2, ZHD3, ZHD4, ZHD5, ZHD6, ZHD7, ZHD8, ZHD9, ZHD12, ZHD13 and ZHD14. Expressed in roots, inflorescences, open flowers and seeds. Detected in stems and seedlings.

It is found in the nucleus. Functionally, transcription factor involved in the up-regulation of several stress-inducible genes. Acts as a transcriptional activator by interacting with MED25 and NAC proteins. Involved in increased drought tolerance. This is Zinc-finger homeodomain protein 11 (ZHD11) from Arabidopsis thaliana (Mouse-ear cress).